The primary structure comprises 189 residues: MTDTLNRRAAMALGLASAAGAALATPALSQDAAPATVRNNVSGFQMHAWRDHFDSLGKPMLVADTFSRALHYWNAEGGDHRIFPTSVPISDDLTKRGYTEIVRKKEGPSWTPTPSQMARYPDWKPIGPGPDNPLGTHAMYLSWPAYIIHGTHDTRKIGRRSSDGCIGLYNEMIAELFQLCPVGTRVRVI.

Positions 1-35 form a signal peptide, tat-type signal; sequence MTDTLNRRAAMALGLASAAGAALATPALSQDAAPA. The L,D-TPase catalytic domain occupies 59 to 189; it reads PMLVADTFSR…CPVGTRVRVI (131 aa). The active-site Proton donor/acceptor is the histidine 149. The active-site Nucleophile is cysteine 165.

The protein belongs to the YkuD family. Predicted to be exported by the Tat system. The position of the signal peptide cleavage has not been experimentally proven.

The protein operates within cell wall biogenesis; peptidoglycan biosynthesis. This is Putative L,D-transpeptidase in ATP synthase subunits region ORF 5 from Fuscovulum blasticum (Rhodobacter blasticus).